The sequence spans 405 residues: Elongation factor Tu (405 aa).

In terms of domain architecture, tr-type G spans Lys10–Glu215. A G1 region spans residues Gly19–Thr26. Gly19–Thr26 lines the GTP pocket. Mg(2+) is bound at residue Thr26. The G2 stretch occupies residues Gly61 to Asn65. The tract at residues Asp82–Gly85 is G3. GTP contacts are provided by residues Asp82–His86 and Asn137–Asp140. Positions Asn137–Asp140 are G4. The tract at residues Ser175–Leu177 is G5.

This sequence belongs to the TRAFAC class translation factor GTPase superfamily. Classic translation factor GTPase family. EF-Tu/EF-1A subfamily. Monomer.

The protein resides in the cytoplasm. The catalysed reaction is GTP + H2O = GDP + phosphate + H(+). Functionally, GTP hydrolase that promotes the GTP-dependent binding of aminoacyl-tRNA to the A-site of ribosomes during protein biosynthesis. This Deinococcus radiodurans (strain ATCC 13939 / DSM 20539 / JCM 16871 / CCUG 27074 / LMG 4051 / NBRC 15346 / NCIMB 9279 / VKM B-1422 / R1) protein is Elongation factor Tu.